Here is a 214-residue protein sequence, read N- to C-terminus: Probable transaldolase (214 aa).

Residue Lys-83 is the Schiff-base intermediate with substrate of the active site.

It belongs to the transaldolase family. Type 3B subfamily.

It localises to the cytoplasm. It carries out the reaction D-sedoheptulose 7-phosphate + D-glyceraldehyde 3-phosphate = D-erythrose 4-phosphate + beta-D-fructose 6-phosphate. It participates in carbohydrate degradation; pentose phosphate pathway; D-glyceraldehyde 3-phosphate and beta-D-fructose 6-phosphate from D-ribose 5-phosphate and D-xylulose 5-phosphate (non-oxidative stage): step 2/3. Transaldolase is important for the balance of metabolites in the pentose-phosphate pathway. This Clostridium botulinum (strain Alaska E43 / Type E3) protein is Probable transaldolase.